We begin with the raw amino-acid sequence, 792 residues long: Zinc finger CCCH domain-containing protein 11A (792 aa).

3 consecutive C3H1-type zinc fingers follow at residues 2–29, 31–57, and 60–87; these read PNQGEDCYFYFYSTCAKGDSCPFRHCEA, LGNETVCTLWQEGRCFRQVCRFRHMEI, and KRSEIPCYWENQPVGCQKLNCAFHHTRS. Disordered stretches follow at residues 103 to 191, 223 to 331, and 345 to 443; these read PTVP…VHNG, KKMK…KAGE, and ASQK…RSMQ. Ser108 carries the post-translational modification Phosphoserine. Residues Lys114 and Lys124 each participate in a glycyl lysine isopeptide (Lys-Gly) (interchain with G-Cter in SUMO2) cross-link. Polar residues predominate over residues 115–135; it reads TSQLTVQQSKLSVQSNPSPQL. Ser132 bears the Phosphoserine mark. Residue Lys140 forms a Glycyl lysine isopeptide (Lys-Gly) (interchain with G-Cter in SUMO2) linkage. A phosphoserine mark is found at Ser149, Ser171, and Ser289. Over residues 160 to 175 the composition is skewed to acidic residues; it reads ADDDEDDDDQFSEEGD. Basic and acidic residues-rich tracts occupy residues 308–331 and 345–360; these read KKVESPETNIDKAPKKERGHKAGE and ASQKRGELQTKLKAEE. The stretch at 338-360 forms a coiled coil; it reads EEILLERASQKRGELQTKLKAEE. Residue Ser346 is modified to Phosphoserine. Residues 367–376 are compositionally biased toward low complexity; sequence SPSGTKSSSS. 2 stretches are compositionally biased toward basic and acidic residues: residues 393 to 405 and 431 to 443; these read QQEMERQKSKKDT and QPEEPAGRARSMQ. A Glycyl lysine isopeptide (Lys-Gly) (interchain with G-Cter in SUMO2) cross-link involves residue Lys454. Disordered stretches follow at residues 458 to 531 and 545 to 571; these read ALRV…PTKL and QRLQERGASQKEKAALSSVRGDEASSY. A compositionally biased stretch (polar residues) spans 461–473; sequence VQQSSESSGNSRP. Basic and acidic residues-rich tracts occupy residues 492 to 501 and 545 to 558; these read GVKEEKKCGL and QRLQERGASQKEKA. A Glycyl lysine isopeptide (Lys-Gly) (interchain with G-Cter in SUMO2) cross-link involves residue Lys601. The segment at 690–750 is disordered; sequence LSEDKPVTMS…SASTGKPPLS (61 aa). The segment covering 698 to 715 has biased composition (polar residues); that stretch reads MSETENPKDSSVLSSAQA. Positions 717–730 are enriched in low complexity; the sequence is SEPLLPEGSGPSSS.

As to quaternary structure, interacts with TREX complex components THOC2, DDX39 and POLDIP3; the interactions are ATP-dependent. Interacts with PABPN1; this interaction retains ZC3H11A in nuclear speckles. Interacts with KPNA3.

It is found in the nucleus speckle. Its function is as follows. Through its association with TREX complex components, may participate in the export and post-transcriptional coordination of selected mRNA transcripts, including those required to maintain the metabolic processes in embryonic cells. Binds RNA. In Mus musculus (Mouse), this protein is Zinc finger CCCH domain-containing protein 11A (Zc3h11a).